The following is a 456-amino-acid chain: Glycerol-3-phosphate dehydrogenase [NAD(+)] At3g07690, cytosolic (456 aa).

NAD(+)-binding positions include 41-46, K189, and A228; that span reads GAGAWG. K189 is a substrate binding site. K278 (proton acceptor) is an active-site residue. Positions 340 and 368 each coordinate NAD(+). A substrate-binding site is contributed by 340-341; that stretch reads RN.

Belongs to the NAD-dependent glycerol-3-phosphate dehydrogenase family. In terms of assembly, homodimer.

Its subcellular location is the cytoplasm. The catalysed reaction is sn-glycerol 3-phosphate + NAD(+) = dihydroxyacetone phosphate + NADH + H(+). Its function is as follows. Required for glycerol-3-phosphate (G3P) accumulation during systemic acquired resistance (SAR) establishment. The sequence is that of Glycerol-3-phosphate dehydrogenase [NAD(+)] At3g07690, cytosolic from Arabidopsis thaliana (Mouse-ear cress).